We begin with the raw amino-acid sequence, 156 residues long: Small ribosomal subunit protein uS7cz/uS7cy (156 aa).

The protein belongs to the universal ribosomal protein uS7 family. As to quaternary structure, part of the 30S ribosomal subunit.

It is found in the plastid. The protein localises to the chloroplast. One of the primary rRNA binding proteins, it binds directly to 16S rRNA where it nucleates assembly of the head domain of the 30S subunit. The chain is Small ribosomal subunit protein uS7cz/uS7cy (rps7-A) from Triticum aestivum (Wheat).